The chain runs to 1735 residues: MKCVASKFNMWLHLGWLLGLLLVLLPLVRCQGWGEPRFETGNVENISLAAYNEAQLQQDVWMVEEMDAPFVLLYINYQGPSEPTIRESPADLDARLQLSEGGRWSIVINRRQDYEVHQRSSLILLAVESTAIPYAIVVNLVNVLDNAPVMTAQGSCEIEELRGDFVTDCLFNVYHADGFEENGIGNSSTNELSFEIGDVAGARDHFTYVPSTVTPSQPIYNKLFNLKVLKQLDYTENAIFNFITTVYDLDRTHSFKMSTIVQVRNVDSRPPIFSRPFTSERIMEKEPFYATVIAIDRDTGLNKPICYELTALVPEYQKYFEIGQTDGKLTVHPIDRDAEQNELYTFTIVAYKCHNRLLNTSSEGAIILLDKNDNIPEIYMKPLELEFWENTIMELPFDELVIHDRDLGENARYEVRLAETVAGVQQTTDSFTIIPGNGYQRVSFTININNATSLDYELPERQTFVLHVTAHEPIEPTHESTQPITIRLKNWNDEVPKFGRDEYQISVPETIGAGELLATVTVTDRDIDDGIRLFALGRLAESLSVTELPVSAEPETNLPLYGFEIATKVGDIFDYDIAKEVIVQLQAEDTLRTAKQESLHQIFSQLTITVIDVNNKPPQITLPRGTMHILENSVPDSAVIIGEEQIAQIIGTDPDTEAELEFSIDWSNSYGTKSGIRAKAETYENCFYIHEEKVNRQRTIGTIRVNPTFPLDVDHEMYDTLFLVIRLVDRNQTILPNTVETVVAIQIDDENDNAPYFDNSTLTVVRSVKERSDSGVTIGNIIAHDIDGPGNNEITFAMEPIDPAHKGWMNIDDNGIVRVEGNRSIDCDIPPIDKVLQNVTISDWKWSNWHVFEIVLMDTNNKQPYHDPFPNDGQVYQFEKIPSNTAIVRVEGKDQDRDVPYHTVSYEINYRDFPQLQRYFEVDSTGRVYVKENNDLLDRDAGLESIMINIVMLDNAGGYDIQNRVSTNINLTLLDINDHTPKLPELAADELKVSENAKQGYIVKTPFAALDLDDKRTPNAKINYYIEEMTPELETPLFSLENIDEYNAVLRVAQDLKGFYGTWTLKIKACDRGSEYEPIIPLTEEPKDNCETRDYELTVEPFNYNTPSITYPSRSAQLRLKYESLQNGRPLVETNGSPLPKFEAIDDDGGIYGDVTFSLTSTNDGEQDHEVFRVDKVDNKTGLLVLENSLAVQPFPKNYSITVIARDGGDRQSEAAIHVVFINMTGEPAFLEPTFDTDFTENEEGRDERRQLPFAEDPKNAGLPPGAETNVYYFIDKTYGNASHLFQLDRVSNVLQLAQLLDREEIPTHEIRIVATNNENGPPDTVLESSPSLLVVRIKVNDVNDNPPVFQQRLYAAGITTNDRVPKALFRVYAEDPDEDEIIRYELVNGTAVGENLQTDGLPFRLHPDSGELTLTSKVQPNQNGYYQLTLIAFDRDDTHNDTVPAKVYIVSESNRVTFVFLNSVEEIDQPDVRKFLAQELTGAYEMECNIDDIDQTTASDGRQAGGSSSALTDVRTHFIQDNQAVEASRIQQRSSNRTFVTVLKTTLRTRGLSLQDVPPLATEALTEADETLQIILIVVSAALAVLCVILFVAFFIKIRSLNRQLKALSATDFGSISSELNGKPTRNVPTTNIFSIEGSNPVLNDNEFRDRMGGSGGGVYDDLSLQSEESDFNDVDRDIFAPKRKESLNPALLEHIRQRSLNPMANGTDKSNDGAPTSNHKKLDETDDELSHRF.

The N-terminal stretch at 1–30 is a signal peptide; the sequence is MKCVASKFNMWLHLGWLLGLLLVLLPLVRC. The Extracellular portion of the chain corresponds to 31 to 1574; it reads QGWGEPRFET…ALTEADETLQ (1544 aa). Residues 166–1456 form an extracellular domain (EC) region; that stretch reads VTDCLFNVYH…KVYIVSESNR (1291 aa). 11 Cadherin domains span residues 171–273, 280–378, 379–498, 499–620, 621–757, 767–866, 879–983, 985–1109, 1136–1235, 1255–1350, and 1351–1461; these read FNVY…PPIF, ERIM…IPEI, YMKP…VPKF, GRDE…PPQI, TLPR…APYF, SVKE…QPYH, EKIP…TPKL, ELAA…TPSI, GSPL…EPTF, AEDP…PPVF, and QQRL…TFVF. 2 consecutive short sequence motifs (toxin-binding receptor motif) follow at residues 1344 to 1350 and 1446 to 1456; these read NDNPPVF and AKVYIVSESNR. The tract at residues 1358 to 1569 is CR11-MPED, increases toxicity of activated Cry4B toxin, peptide alone is not toxic; the sequence is GITTNDRVPK…PLATEALTEA (212 aa). The tract at residues 1457-1569 is membrane-proximal EC domain (MPED); that stretch reads VTFVFLNSVE…PLATEALTEA (113 aa). Residues 1575–1595 form a helical membrane-spanning segment; sequence IILIVVSAALAVLCVILFVAF. Residues 1596 to 1735 are Cytoplasmic-facing; the sequence is FIKIRSLNRQ…ETDDELSHRF (140 aa). Residues 1701-1719 are compositionally biased toward polar residues; it reads SLNPMANGTDKSNDGAPTS. The tract at residues 1701 to 1735 is disordered; the sequence is SLNPMANGTDKSNDGAPTSNHKKLDETDDELSHRF. The span at 1722 to 1735 shows a compositional bias: basic and acidic residues; it reads KKLDETDDELSHRF.

Larval midgut (at protein level).

It is found in the apical cell membrane. The protein resides in the cell projection. Its subcellular location is the microvillus membrane. In terms of biological role, cadherins are calcium-dependent cell adhesion proteins. They preferentially interact with themselves in a homophilic manner in connecting cells. Functionally, (Microbial infection) Binds to and is probably the functional receptor for B.thuringiensis subsp. israelensis (Bti) insecticidal toxin Cry4B. Trichoplusia ni insect cells stably transfected with this protein become suspectible to Cry4B; cells undergo oncosis, they bleb and ruffle after 20-40 minutes, swell after 40-60 minutes and lyse after 90 minutes. Following toxin treatment in the T.in insect system levels of intracellular 3',5'-cyclic AMP (cAMP) rise 12.5-fold; EDTA but not EGTA pretreatment prevents cAMP increase. Inorganic phosphate also rises 3.4-fold after toxin treatment. The protein is Cadherin-AgCad1 of Anopheles gambiae (African malaria mosquito).